A 316-amino-acid polypeptide reads, in one-letter code: tRNA dimethylallyltransferase (316 aa).

17 to 24 serves as a coordination point for ATP; it reads GPTASGKT. 19–24 contacts substrate; the sequence is TASGKT. 3 interaction with substrate tRNA regions span residues 42–45, 166–170, and 247–252; these read DSAL, QRLSR, and RCVGYR.

It belongs to the IPP transferase family. Monomer. Mg(2+) is required as a cofactor.

It carries out the reaction adenosine(37) in tRNA + dimethylallyl diphosphate = N(6)-dimethylallyladenosine(37) in tRNA + diphosphate. Catalyzes the transfer of a dimethylallyl group onto the adenine at position 37 in tRNAs that read codons beginning with uridine, leading to the formation of N6-(dimethylallyl)adenosine (i(6)A). The protein is tRNA dimethylallyltransferase of Erwinia tasmaniensis (strain DSM 17950 / CFBP 7177 / CIP 109463 / NCPPB 4357 / Et1/99).